A 368-amino-acid chain; its full sequence is Glutamate 5-kinase (368 aa).

An ATP-binding site is contributed by K10. Substrate is bound by residues S50, D137, and N149. 169-170 contacts ATP; it reads TD. A PUA domain is found at 276-354; it reads RGTLVLDDGA…ESIVRELGYM (79 aa).

This sequence belongs to the glutamate 5-kinase family.

It is found in the cytoplasm. It carries out the reaction L-glutamate + ATP = L-glutamyl 5-phosphate + ADP. Its pathway is amino-acid biosynthesis; L-proline biosynthesis; L-glutamate 5-semialdehyde from L-glutamate: step 1/2. In terms of biological role, catalyzes the transfer of a phosphate group to glutamate to form L-glutamate 5-phosphate. This is Glutamate 5-kinase from Pseudomonas savastanoi pv. phaseolicola (strain 1448A / Race 6) (Pseudomonas syringae pv. phaseolicola (strain 1448A / Race 6)).